Consider the following 376-residue polypeptide: Flagellar P-ring protein 2 (376 aa).

Residues 1 to 19 (MTRLLLALILVVSAASAQA) form the signal peptide.

It belongs to the FlgI family. As to quaternary structure, the basal body constitutes a major portion of the flagellar organelle and consists of four rings (L,P,S, and M) mounted on a central rod.

It localises to the periplasm. It is found in the bacterial flagellum basal body. Functionally, assembles around the rod to form the L-ring and probably protects the motor/basal body from shearing forces during rotation. The protein is Flagellar P-ring protein 2 of Bradyrhizobium diazoefficiens (strain JCM 10833 / BCRC 13528 / IAM 13628 / NBRC 14792 / USDA 110).